The primary structure comprises 220 residues: Probable chemoreceptor glutamine deamidase CheD 2 (220 aa).

This sequence belongs to the CheD family.

It catalyses the reaction L-glutaminyl-[protein] + H2O = L-glutamyl-[protein] + NH4(+). Functionally, probably deamidates glutamine residues to glutamate on methyl-accepting chemotaxis receptors (MCPs), playing an important role in chemotaxis. The chain is Probable chemoreceptor glutamine deamidase CheD 2 from Methanosarcina acetivorans (strain ATCC 35395 / DSM 2834 / JCM 12185 / C2A).